We begin with the raw amino-acid sequence, 103 residues long: Large ribosomal subunit protein bL21 (103 aa).

The protein belongs to the bacterial ribosomal protein bL21 family. As to quaternary structure, part of the 50S ribosomal subunit. Contacts protein L20.

Its function is as follows. This protein binds to 23S rRNA in the presence of protein L20. In Thioalkalivibrio sulfidiphilus (strain HL-EbGR7), this protein is Large ribosomal subunit protein bL21.